We begin with the raw amino-acid sequence, 103 residues long: Glycoprotein 24B (103 aa).

The protein belongs to the csb family. In terms of processing, O-glycosylated.

It is found in the cell surface. In terms of biological role, cell-cell adhesion during early development. The protein is Glycoprotein 24B (csbB) of Dictyostelium discoideum (Social amoeba).